The primary structure comprises 706 residues: Histone deacetylase HDA1 (706 aa).

Residues 1-24 (MDSVMVKKEVLENPDHDLKRKLEE) are compositionally biased toward basic and acidic residues. The segment at 1–36 (MDSVMVKKEVLENPDHDLKRKLEENKEEENSLSTTS) is disordered. The histone deacetylase stretch occupies residues 67–396 (RYHAKIFTSY…ALSVAKVLIG (330 aa)). Histidine 206 is a catalytic residue.

Belongs to the histone deacetylase family. HD type 2 subfamily.

Its subcellular location is the nucleus. It carries out the reaction N(6)-acetyl-L-lysyl-[histone] + H2O = L-lysyl-[histone] + acetate. In terms of biological role, responsible for the deacetylation of lysine residues on the N-terminal part of the core histones (H2A, H2B, H3 and H4). Histone deacetylation gives a tag for epigenetic repression and plays an important role in transcriptional regulation, cell cycle progression and developmental events. Histone deacetylases act via the formation of large multiprotein complexes. The sequence is that of Histone deacetylase HDA1 (HDA1) from Saccharomyces cerevisiae (strain ATCC 204508 / S288c) (Baker's yeast).